A 324-amino-acid chain; its full sequence is Glucokinase (324 aa).

Ile-6–Thr-11 contributes to the ATP binding site.

The protein belongs to the bacterial glucokinase family.

The protein localises to the cytoplasm. It carries out the reaction D-glucose + ATP = D-glucose 6-phosphate + ADP + H(+). This Zymomonas mobilis subsp. mobilis (strain ATCC 31821 / ZM4 / CP4) protein is Glucokinase.